Here is a 761-residue protein sequence, read N- to C-terminus: Cytoplasmic export protein 1 (761 aa).

HEAT repeat units follow at residues 385 to 423 (IYPHFIQGLTDSDATLRLQTLKTIPCIVSCLTERQLNNE) and 498 to 534 (NTIANKILTVIAPGLLDKSPIVRGRAKILFEEYLEKL). Disordered stretches follow at residues 660 to 692 (DDGWIQDESGPSKVPQKHTRPQNSTLAKSIAPS) and 714 to 761 (STVT…DTNW). Polar residues-rich tracts occupy residues 680-692 (PQNSTLAKSIAPS) and 714-737 (STVTTKSSLSNKTARSKPISSIRG). Residues 747–761 (GWDDDGDSDSWDTNW) show a composition bias toward acidic residues. Ser-754 is subject to Phosphoserine.

As to quaternary structure, associates with the nuclear pore complex (NPC). Interacts with GSP1, LOS1, MSN5, NUP116 and TEF2.

It localises to the cytoplasm. Component of the nuclear tRNA export machinery that my collect tRNA from the nuclear tRNA export receptors of the aminoacylation-dependent export and may deliver aminoacylated tRNAs to the translation machinery pathway at the nuclear pore complex. The sequence is that of Cytoplasmic export protein 1 (CEX1) from Saccharomyces cerevisiae (strain ATCC 204508 / S288c) (Baker's yeast).